The chain runs to 454 residues: Zinc finger protein 474 (454 aa).

The tract at residues 48 to 85 (RGEKIKTNPRKNRPGTVILSKQSSRRIMSGSQPRPPVI) is disordered. Polar residues predominate over residues 66-79 (LSKQSSRRIMSGSQ). The C2HC/C3H-type 1 zinc-finger motif lies at 91–120 (GFRVCYICGREFGSQSLGIHEPQCLEKWRV). Zn(2+) is bound by residues C95, C98, H110, and C114. The interval 125 to 146 (LPKHLRRPEPSKPPPFSGSGSY) is disordered. C2HC/C3H-type zinc fingers lie at residues 162-191 (QLLP…KVEG), 218-247 (RTVI…KWKV), 281-310 (QLVS…QPSG), 352-381 (PTIV…KWHN), and 425-454 (QLVP…KVAK). Zn(2+)-binding residues include C166, C169, H181, C185, C222, C225, H237, and C241. The disordered stretch occupies residues 256–282 (FRQPLPQKPQPLLTGQPKHAGPRQGQL). Residues C285, C288, H300, C304, C356, C359, H371, C375, C429, C432, H444, and C448 each contribute to the Zn(2+) site. A disordered region spans residues 299–345 (VHQRSCKAQPSGPKVQDLTLGSRGGLKESTNPKPQRNMAAPPVTDKP).

Zn(2+) is required as a cofactor.

The sequence is that of Zinc finger protein 474 (ZNF474) from Bos taurus (Bovine).